Consider the following 412-residue polypeptide: [Pyruvate dehydrogenase (acetyl-transferring)] kinase isozyme 4, mitochondrial (412 aa).

Positions 138-368 constitute a Histidine kinase domain; sequence ILEYKDNCTV…DAIIYLKALS (231 aa). ATP is bound by residues 254–261, Asp-293, 312–313, and 329–334; these read ELFKNAMR, ST, and GFGYGL.

The protein belongs to the PDK/BCKDK protein kinase family. In terms of assembly, homodimer. Interacts with the pyruvate dehydrogenase complex subunit DLAT, and is part of the multimeric pyruvate dehydrogenase complex that contains multiple copies of pyruvate dehydrogenase (E1), dihydrolipoamide acetyltransferase (DLAT, E2) and lipoamide dehydrogenase (DLD, E3). In terms of tissue distribution, ubiquitous; highest levels of expression in heart and skeletal muscle.

It is found in the mitochondrion matrix. The catalysed reaction is L-seryl-[pyruvate dehydrogenase E1 alpha subunit] + ATP = O-phospho-L-seryl-[pyruvate dehydrogenase E1 alpha subunit] + ADP + H(+). Functionally, kinase that plays a key role in regulation of glucose and fatty acid metabolism and homeostasis via phosphorylation of the pyruvate dehydrogenase subunits PDHA1 and PDHA2. This inhibits pyruvate dehydrogenase activity, and thereby regulates metabolite flux through the tricarboxylic acid cycle, down-regulates aerobic respiration and inhibits the formation of acetyl-coenzyme A from pyruvate. Inhibition of pyruvate dehydrogenase decreases glucose utilization and increases fat metabolism in response to prolonged fasting and starvation. Plays an important role in maintaining normal blood glucose levels under starvation, and is involved in the insulin signaling cascade. Via its regulation of pyruvate dehydrogenase activity, plays an important role in maintaining normal blood pH and in preventing the accumulation of ketone bodies under starvation. In the fed state, mediates cellular responses to glucose levels and to a high-fat diet. Regulates both fatty acid oxidation and de novo fatty acid biosynthesis. Plays a role in the generation of reactive oxygen species. Protects detached epithelial cells against anoikis. Plays a role in cell proliferation via its role in regulating carbohydrate and fatty acid metabolism. The chain is [Pyruvate dehydrogenase (acetyl-transferring)] kinase isozyme 4, mitochondrial (Pdk4) from Rattus norvegicus (Rat).